Reading from the N-terminus, the 351-residue chain is MRKIIHVDMDCFFAAVEMRDNPALRDIPIAIGGSRERRGVISTANYPARKFGVRSAMPTGMALKLCPHLTLLPGRFDAYKEASNHIREIFSRYTSRIEPLSLDEAYLDVTDSVHCHGSATLIAQEIRQTIFSELQLTASAGVTPVKFLAKIASDMNKPNGQFVITPAEVSAFLQTLPLAKIPGVGKVSAAKLEAMGLRTCGDVQKCDLVILLKRFGKFGRILWERSQGIDERDVNSERLRKSVGVERTMAEDIHHWSECEAIIERLYPELERRLAKVKPDLLIARQGVKLKFDDFQQTTQEHVWPRLNKADLIATARKTWDERRGGRGVRLVGLHVTLLDPQMERQLVLGL.

A UmuC domain is found at Ile-4–Gly-185. Residues Asp-8 and Asp-103 each contribute to the Mg(2+) site. Residue Glu-104 is part of the active site.

This sequence belongs to the DNA polymerase type-Y family. In terms of assembly, monomer. Requires Mg(2+) as cofactor.

It localises to the cytoplasm. It carries out the reaction DNA(n) + a 2'-deoxyribonucleoside 5'-triphosphate = DNA(n+1) + diphosphate. Functionally, poorly processive, error-prone DNA polymerase involved in untargeted mutagenesis. Copies undamaged DNA at stalled replication forks, which arise in vivo from mismatched or misaligned primer ends. These misaligned primers can be extended by PolIV. Exhibits no 3'-5' exonuclease (proofreading) activity. May be involved in translesional synthesis, in conjunction with the beta clamp from PolIII. The chain is DNA polymerase IV from Escherichia coli O157:H7.